Here is a 1087-residue protein sequence, read N- to C-terminus: Formin-H (1087 aa).

Positions 1–23 (MSFDLESNSSGGSTIGRNSSIRL) are enriched in polar residues. Residues 1–25 (MSFDLESNSSGGSTIGRNSSIRLSS) form a disordered region. Residues 34–394 (VSLNEIIDLD…QLEDELKIHP (361 aa)) form the GBD/FH3 domain. Composition is skewed to low complexity over residues 416-436 (FGFG…SMAK) and 549-558 (SPGSTLSPSP). Disordered regions lie at residues 416–445 (FGFG…DNEE), 549–625 (SPGS…PAKP), and 1048–1087 (VDSL…QLKK). Residues 433–461 (SMAKTELKKDNEEKQKTIEHLLKQLNKFS) adopt a coiled-coil conformation. A compositionally biased stretch (polar residues) spans 569-588 (FGITSSSIHTSTDKLTNSTE). An FH1 domain is found at 589–615 (PILGSPPPPPPPPMSGGGGPPPPPPPP). Over residues 592–616 (GSPPPPPPPPMSGGGGPPPPPPPPG) the composition is skewed to pro residues. One can recognise an FH2 domain in the interval 623–1016 (AKPIIKPSVK…ENSKMEDPEK (394 aa)). The 39-residue stretch at 1013–1051 (DPEKGGLQDLSSQIRSGQLFKDRRVGDSVIAQMQNVDSL) folds into the DAD domain.

The protein belongs to the formin homology family. Diaphanous subfamily. In terms of assembly, interacts with vasP, proB/profilin-2 and rac1A. Interacts (via GBD/FH3 domain) with activated Rho-GTPases.

It is found in the cytoplasm. It localises to the cell cortex. The protein resides in the cytoskeleton. Formins play an important role in the nucleation of actin and the formation of linear actin filaments. Important for cell migration and formation, elongation and maintenance of filopodia. Specifically controls filopodial dynamics by regulating actin turnover at the barbed ends of actin filaments. The protein is Formin-H (forH) of Dictyostelium discoideum (Social amoeba).